Consider the following 222-residue polypeptide: Peroxiredoxin (222 aa).

The Thioredoxin domain occupies 2–157 (VVLGQKFPEV…ILRLVEALQT (156 aa)). Residue Cys-44 is the Cysteine sulfenic acid (-SOH) intermediate of the active site. Arg-120 contacts substrate. Cys-211 and Cys-217 form a disulfide bridge.

It belongs to the peroxiredoxin family. Prx6 subfamily. As to quaternary structure, homodecamer. Pentamer of dimers that assemble into a ring structure.

It is found in the cytoplasm. It catalyses the reaction a hydroperoxide + [thioredoxin]-dithiol = an alcohol + [thioredoxin]-disulfide + H2O. In terms of biological role, thiol-specific peroxidase that catalyzes the reduction of hydrogen peroxide and organic hydroperoxides to water and alcohols, respectively. Plays a role in cell protection against oxidative stress by detoxifying peroxides. In Nanoarchaeum equitans (strain Kin4-M), this protein is Peroxiredoxin.